The primary structure comprises 379 residues: Lipoyl synthase, mitochondrial (379 aa).

Residues C106, C111, C117, C137, C141, C144, and S352 each contribute to the [4Fe-4S] cluster site. A Radical SAM core domain is found at E122–L341.

The protein belongs to the radical SAM superfamily. Lipoyl synthase family. It depends on [4Fe-4S] cluster as a cofactor.

The protein resides in the mitochondrion. It catalyses the reaction [[Fe-S] cluster scaffold protein carrying a second [4Fe-4S](2+) cluster] + N(6)-octanoyl-L-lysyl-[protein] + 2 oxidized [2Fe-2S]-[ferredoxin] + 2 S-adenosyl-L-methionine + 4 H(+) = [[Fe-S] cluster scaffold protein] + N(6)-[(R)-dihydrolipoyl]-L-lysyl-[protein] + 4 Fe(3+) + 2 hydrogen sulfide + 2 5'-deoxyadenosine + 2 L-methionine + 2 reduced [2Fe-2S]-[ferredoxin]. Its pathway is protein modification; protein lipoylation via endogenous pathway; protein N(6)-(lipoyl)lysine from octanoyl-[acyl-carrier-protein]: step 2/2. Catalyzes the radical-mediated insertion of two sulfur atoms into the C-6 and C-8 positions of the octanoyl moiety bound to the lipoyl domains of lipoate-dependent enzymes, thereby converting the octanoylated domains into lipoylated derivatives. The chain is Lipoyl synthase, mitochondrial from Drosophila erecta (Fruit fly).